Here is a 537-residue protein sequence, read N- to C-terminus: Formimidoyltransferase-cyclodeaminase (537 aa).

The interval 1-181 (MNKLVECVPN…GASVTGARSF (181 aa)) is formiminotransferase N-subdomain. His-82 functions as the For formimidoyltransferase activity in the catalytic mechanism. Position 163-172 (163-172 (GPAKFIPSYG)) interacts with folate. The tract at residues 182–326 (LIAYNVNILG…PKKRIIDYMV (145 aa)) is formiminotransferase C-subdomain. The interval 327–335 (QEDLKVTQP) is linker. Residues 336–537 (LASMSVRGFV…VLEILSNRKE (202 aa)) form a cyclodeaminase/cyclohydrolase region. Asp-413 functions as the For cyclodeaminase activity in the catalytic mechanism.

It in the C-terminal section; belongs to the cyclodeaminase/cyclohydrolase family. This sequence in the N-terminal section; belongs to the formiminotransferase family. Homooctamer, including four polyglutamate binding sites. The subunits are arranged as a tetramer of dimers, and form a planar ring-shaped structure.

It is found in the cytoplasm. The protein resides in the cytosol. Its subcellular location is the golgi apparatus. The protein localises to the cytoskeleton. It localises to the microtubule organizing center. It is found in the centrosome. The protein resides in the centriole. It carries out the reaction 5-formimidoyltetrahydrofolate + L-glutamate = N-formimidoyl-L-glutamate + (6S)-5,6,7,8-tetrahydrofolate. It catalyses the reaction 5-formimidoyltetrahydrofolate + 2 H(+) = (6R)-5,10-methenyltetrahydrofolate + NH4(+). Its pathway is amino-acid degradation; L-histidine degradation into L-glutamate; L-glutamate from N-formimidoyl-L-glutamate (transferase route): step 1/1. In terms of biological role, folate-dependent enzyme, that displays both transferase and deaminase activity. Serves to channel one-carbon units from formiminoglutamate to the folate pool. This chain is Formimidoyltransferase-cyclodeaminase (ftcd), found in Dictyostelium discoideum (Social amoeba).